The sequence spans 416 residues: Deferrochelatase (416 aa).

The segment at residues 1–28 (MSDEQKKPEQIHRRDILKWGAMAGAAVA) is a signal peptide (tat-type signal). 241–243 (GTG) provides a ligand contact to heme b. Residues 293–318 (QEDTFGRRKSSGAPFGQKKETDPVKL) are disordered. Heme b contacts are provided by His326 and Arg339.

The protein belongs to the DyP-type peroxidase family. In terms of assembly, component of the iron transporter efeUOB/M complex composed of EfeU, EfeM and EfeB; EfeU is essential for the complex formation. Heme b is required as a cofactor. In terms of processing, exported by the Tat system. The position of the signal peptide cleavage has not been experimentally proven.

It localises to the secreted. The protein resides in the cell membrane. It carries out the reaction heme b + 2 H(+) = protoporphyrin IX + Fe(2+). The enzyme catalyses 2 Fe(2+) + H2O2 + 2 H(+) = 2 Fe(3+) + 2 H2O. Its function is as follows. Involved in the recovery of exogenous heme iron. Extracts iron from heme while preserving the protoporphyrin ring intact. Part of the iron transporter system efeUOB/M involved in iron import. Catalyzes the peroxide-mediated oxidation of Fe(2+) into Fe(3+); EfeM binds Fe(3+) and delivers it to the cell membrane permease EfeU. This Bacillus subtilis (strain 168) protein is Deferrochelatase.